A 90-amino-acid polypeptide reads, in one-letter code: U7-theraphotoxin-Hhn1a 5 (90 aa).

Positions 1–19 (MKTAIFTVVLALAVFAVLS) are cleaved as a signal peptide. The propeptide occupies 20 to 50 (FGWEANEKALSEESTELIHEKEAASETEARE). Disulfide bonds link Cys-51–Cys-65, Cys-58–Cys-70, and Cys-64–Cys-81.

This sequence belongs to the neurotoxin 10 (Hwtx-1) family. 13 (Hntx-13) subfamily. In terms of tissue distribution, expressed by the venom gland.

The protein resides in the secreted. Ion channel inhibitor. This chain is U7-theraphotoxin-Hhn1a 5, found in Cyriopagopus hainanus (Chinese bird spider).